Here is a 365-residue protein sequence, read N- to C-terminus: DNA polymerase IV (365 aa).

One can recognise a UmuC domain in the interval 7 to 188 (IIHIDMDAFY…LPVNKFFGVG (182 aa)). Residues Asp11 and Asp106 each contribute to the Mg(2+) site. Glu107 is an active-site residue.

It belongs to the DNA polymerase type-Y family. In terms of assembly, monomer. The cofactor is Mg(2+).

Its subcellular location is the cytoplasm. It carries out the reaction DNA(n) + a 2'-deoxyribonucleoside 5'-triphosphate = DNA(n+1) + diphosphate. Its function is as follows. Poorly processive, error-prone DNA polymerase involved in untargeted mutagenesis. Copies undamaged DNA at stalled replication forks, which arise in vivo from mismatched or misaligned primer ends. These misaligned primers can be extended by PolIV. Exhibits no 3'-5' exonuclease (proofreading) activity. May be involved in translesional synthesis, in conjunction with the beta clamp from PolIII. The polypeptide is DNA polymerase IV (Clostridioides difficile (strain 630) (Peptoclostridium difficile)).